A 418-amino-acid polypeptide reads, in one-letter code: Argininosuccinate synthase (418 aa).

16–24 provides a ligand contact to ATP; the sequence is AYSGGLDTS. An L-citrulline-binding site is contributed by tyrosine 95. An ATP-binding site is contributed by glycine 125. The L-aspartate site is built by threonine 127, asparagine 131, and aspartate 132. Asparagine 131 lines the L-citrulline pocket. 4 residues coordinate L-citrulline: arginine 135, serine 183, glutamate 267, and tyrosine 279.

The protein belongs to the argininosuccinate synthase family. Type 1 subfamily. In terms of assembly, homotetramer.

The protein resides in the cytoplasm. The enzyme catalyses L-citrulline + L-aspartate + ATP = 2-(N(omega)-L-arginino)succinate + AMP + diphosphate + H(+). It participates in amino-acid biosynthesis; L-arginine biosynthesis; L-arginine from L-ornithine and carbamoyl phosphate: step 2/3. The protein is Argininosuccinate synthase of Bifidobacterium adolescentis (strain ATCC 15703 / DSM 20083 / NCTC 11814 / E194a).